Consider the following 400-residue polypeptide: Lysophospholipid transporter LplT (400 aa).

Transmembrane regions (helical) follow at residues 19-39 (VIVA…ATLA), 53-73 (VLQM…GQIA), 91-111 (AGAA…LVGI), 139-159 (LMEA…GVLA), 164-184 (IAAL…NLFI), 195-213 (SWRL…VVLW), 227-247 (LFWG…PVAL), 257-277 (YLNA…AKLV), 281-301 (TVSR…IFSL), 304-324 (ALLP…FFVV), 352-372 (NSAM…GVPA), and 373-393 (VAIG…LWIW).

Belongs to the major facilitator superfamily. LplT (TC 2.A.1.42) family.

It localises to the cell inner membrane. Functionally, catalyzes the facilitated diffusion of 2-acyl-glycero-3-phosphoethanolamine (2-acyl-GPE) into the cell. The chain is Lysophospholipid transporter LplT from Salmonella typhi.